A 407-amino-acid polypeptide reads, in one-letter code: RNA-binding motif, single-stranded-interacting protein 2 (407 aa).

An N-acetylmethionine modification is found at M1. A disordered region spans residues F14–D51. Residues S37–S47 are compositionally biased toward low complexity. RRM domains are found at residues T56–Q129 and T135–G220. The residue at position 106 (S106) is a Phosphoserine. Phosphoserine is present on residues S280 and S285. The span at P374–V392 shows a compositional bias: low complexity. The tract at residues P374–H398 is disordered.

The protein resides in the nucleus. The protein is RNA-binding motif, single-stranded-interacting protein 2 (RBMS2) of Bos taurus (Bovine).